Here is an 87-residue protein sequence, read N- to C-terminus: Small ribosomal subunit protein bS20 (87 aa).

Positions 1–11 (MAHHKSAIKRI) are enriched in basic residues. The disordered stretch occupies residues 1–26 (MAHHKSAIKRIKQNEKRNARNRHQKS).

This sequence belongs to the bacterial ribosomal protein bS20 family.

Functionally, binds directly to 16S ribosomal RNA. This is Small ribosomal subunit protein bS20 from Trichlorobacter lovleyi (strain ATCC BAA-1151 / DSM 17278 / SZ) (Geobacter lovleyi).